Reading from the N-terminus, the 84-residue chain is Acyl carrier protein (84 aa).

Residues 1–75 (MIFQKIQEFI…DILEYIQQHV (75 aa)) enclose the Carrier domain. Ser-35 bears the O-(pantetheine 4'-phosphoryl)serine mark.

The protein belongs to the acyl carrier protein (ACP) family. 4'-phosphopantetheine is transferred from CoA to a specific serine of apo-ACP by AcpS. This modification is essential for activity because fatty acids are bound in thioester linkage to the sulfhydryl of the prosthetic group.

Its subcellular location is the cytoplasm. Its pathway is lipid metabolism; fatty acid biosynthesis. In terms of biological role, carrier of the growing fatty acid chain in fatty acid biosynthesis. The sequence is that of Acyl carrier protein from Phytoplasma mali (strain AT).